The chain runs to 238 residues: Cysteine-rich venom protein (238 aa).

Positions Met1 to Gly19 are cleaved as a signal peptide. Positions Thr20–Ser27 are excised as a propeptide. An SCP domain is found at Lys39–Tyr164. 8 disulfides stabilise this stretch: Cys75/Cys153, Cys92/Cys165, Cys148/Cys162, Cys184/Cys191, Cys187/Cys196, Cys200/Cys233, Cys209/Cys227, and Cys218/Cys231. A ShKT domain is found at Cys200–Cys233.

Belongs to the CRISP family. Expressed by the venom gland.

The protein localises to the secreted. In terms of biological role, blocks olfactory (CNGA2) and retinal (CNGA1) cyclic nucleotide-gated (CNG) ion channel currents. Does not inhibit retinal (CNGA3) currents. It forms high-affinity contacts with the pore turret region and most likely inhibits CNG channel current by blocking the external entrance to the transmembrane pore. Does not affect neither depolarization- nor caffeine-induced contraction arterial smooth muscle. The chain is Cysteine-rich venom protein from Demansia vestigiata (Lesser black whip snake).